The chain runs to 447 residues: NADP-specific glutamate dehydrogenase (447 aa).

Residues Lys92, Gln113, and Lys116 each coordinate substrate. The active-site Proton donor is Lys128. Position 167 (Gly167) interacts with substrate. NADP(+)-binding residues include Thr212 and Asn243. Ser379 contributes to the substrate binding site.

It belongs to the Glu/Leu/Phe/Val dehydrogenases family. Homohexamer.

The enzyme catalyses L-glutamate + NADP(+) + H2O = 2-oxoglutarate + NH4(+) + NADPH + H(+). Its function is as follows. Catalyzes the reversible oxidative deamination of glutamate to alpha-ketoglutarate and ammonia. The chain is NADP-specific glutamate dehydrogenase (gdh) from Corynebacterium glutamicum (strain ATCC 13032 / DSM 20300 / JCM 1318 / BCRC 11384 / CCUG 27702 / LMG 3730 / NBRC 12168 / NCIMB 10025 / NRRL B-2784 / 534).